Consider the following 577-residue polypeptide: Cryptochrome DASH, chloroplastic/mitochondrial (577 aa).

The transit peptide at 1-53 directs the protein to the chloroplast and mitochondrion; sequence MIKQPFLLTKFTPFSSKSKHTLFTFHCNFSIKMASLTARTTPTVQNVPGLTPE. The 142-residue stretch at 78–219 folds into the Photolyase/cryptochrome alpha/beta domain; the sequence is GVAIVWFRND…GNDPGSGNTT (142 aa). The interval 550–577 is disordered; that stretch reads TKKTGDSKTAFSSRRGRPEDNRRKRHGY.

The protein belongs to the DNA photolyase class-1 family. Requires FAD as cofactor. The cofactor is (6R)-5,10-methylene-5,6,7,8-tetrahydrofolate. As to expression, expressed in the endosperm and embryo 96 hours after seed imbibition. In the embryo, detected in the root meristem, the root cap, the shoot apical meristem and the epidermis of cotyledons. In adult plants, detcted in roots, the whole leaf lamina, the stem and in glandular trichomes.

It is found in the plastid. Its subcellular location is the chloroplast. It localises to the mitochondrion. May have a photoreceptor function and might bind ss- and ds-DNA in a sequence non-specific manner. Lacks photolyase activity. Has a potential role in detecting the dawn and dusk transitions and, consequently, in circadian input pathways. The polypeptide is Cryptochrome DASH, chloroplastic/mitochondrial (Solanum lycopersicum (Tomato)).